The sequence spans 186 residues: Elongation factor P (186 aa).

Belongs to the elongation factor P family.

The protein resides in the cytoplasm. The protein operates within protein biosynthesis; polypeptide chain elongation. In terms of biological role, involved in peptide bond synthesis. Stimulates efficient translation and peptide-bond synthesis on native or reconstituted 70S ribosomes in vitro. Probably functions indirectly by altering the affinity of the ribosome for aminoacyl-tRNA, thus increasing their reactivity as acceptors for peptidyl transferase. The polypeptide is Elongation factor P (Streptococcus sanguinis (strain SK36)).